Consider the following 233-residue polypeptide: Archaetidylserine synthase (233 aa).

A run of 8 helical transmembrane segments spans residues 7-27, 29-49, 75-95, 102-122, 126-146, 147-167, 180-200, and 206-226; these read ITSF…SGYL, ILLS…LAVL, SLSD…SAAV, ILVG…FNVL, GKNF…SFYL, TGFY…VLMI, ASTA…VEIL, and VAGP…AVPI.

Belongs to the CDP-alcohol phosphatidyltransferase class-I family.

It localises to the membrane. The catalysed reaction is CDP-2,3-bis-O-(geranylgeranyl)-sn-glycerol + L-serine = archaetidylserine + CMP + H(+). The enzyme catalyses CDP-2,3-bis-O-(phytanyl)-sn-glycerol + L-serine = 2,3-bis-O-phytanyl-sn-glycero-3-phospho-L-serine + CMP + H(+). It functions in the pathway membrane lipid metabolism; glycerophospholipid metabolism. Activated by Mn(2+) ions. Its function is as follows. Involved in the lipid biosynthesis. Catalyzes the formation of unsaturated archaetidylserine from CDP-unsaturated archaeol and L-serine. Activity with ester-linked substrate analogs containing straight aliphatic chains (typical bacterial substrates) is two to three times higher than that with the corresponding ether-type substrate (typical archaeal substrates). Both enantiomers of CDP-unsaturated archaeols with ether-linked geranylgeranyl chains and CDP-saturated archaeol with ether-linked phytanyl chains are similarly active. The enzyme also accepts D-serine, although activity is only about third of that with L-serine. The polypeptide is Archaetidylserine synthase (Methanothermobacter thermautotrophicus (strain ATCC 29096 / DSM 1053 / JCM 10044 / NBRC 100330 / Delta H) (Methanobacterium thermoautotrophicum)).